Consider the following 417-residue polypeptide: Serine hydroxymethyltransferase (417 aa).

(6S)-5,6,7,8-tetrahydrofolate contacts are provided by residues Leu-121 and 125–127 (GHL). At Lys-229 the chain carries N6-(pyridoxal phosphate)lysine. 355 to 357 (SSF) contributes to the (6S)-5,6,7,8-tetrahydrofolate binding site.

This sequence belongs to the SHMT family. As to quaternary structure, homodimer. Requires pyridoxal 5'-phosphate as cofactor.

The protein localises to the cytoplasm. The catalysed reaction is (6R)-5,10-methylene-5,6,7,8-tetrahydrofolate + glycine + H2O = (6S)-5,6,7,8-tetrahydrofolate + L-serine. Its pathway is one-carbon metabolism; tetrahydrofolate interconversion. It participates in amino-acid biosynthesis; glycine biosynthesis; glycine from L-serine: step 1/1. Functionally, catalyzes the reversible interconversion of serine and glycine with tetrahydrofolate (THF) serving as the one-carbon carrier. This reaction serves as the major source of one-carbon groups required for the biosynthesis of purines, thymidylate, methionine, and other important biomolecules. Also exhibits THF-independent aldolase activity toward beta-hydroxyamino acids, producing glycine and aldehydes, via a retro-aldol mechanism. In Baumannia cicadellinicola subsp. Homalodisca coagulata, this protein is Serine hydroxymethyltransferase.